The sequence spans 508 residues: Photosystem II CP47 reaction center protein (508 aa).

The next 6 membrane-spanning stretches (helical) occupy residues 21–36 (SVHI…WAGS), 101–115 (IVFS…IWHW), 140–156 (GIHL…FGAF), 203–218 (IAAG…FHLS), 237–252 (VLSS…AFVV), and 457–472 (SFAL…HGAR).

Belongs to the PsbB/PsbC family. PsbB subfamily. In terms of assembly, PSII is composed of 1 copy each of membrane proteins PsbA, PsbB, PsbC, PsbD, PsbE, PsbF, PsbH, PsbI, PsbJ, PsbK, PsbL, PsbM, PsbT, PsbX, PsbY, PsbZ, Psb30/Ycf12, at least 3 peripheral proteins of the oxygen-evolving complex and a large number of cofactors. It forms dimeric complexes. It depends on Binds multiple chlorophylls. PSII binds additional chlorophylls, carotenoids and specific lipids. as a cofactor.

It is found in the plastid. The protein resides in the chloroplast thylakoid membrane. In terms of biological role, one of the components of the core complex of photosystem II (PSII). It binds chlorophyll and helps catalyze the primary light-induced photochemical processes of PSII. PSII is a light-driven water:plastoquinone oxidoreductase, using light energy to abstract electrons from H(2)O, generating O(2) and a proton gradient subsequently used for ATP formation. In Gossypium hirsutum (Upland cotton), this protein is Photosystem II CP47 reaction center protein.